A 206-amino-acid chain; its full sequence is Ras-related protein Rab7 (206 aa).

GTP is bound by residues 15–22 (GDTGVGKT), 63–67 (DTAGQ), and 125–128 (NKID). 2 S-geranylgeranyl cysteine lipidation sites follow: cysteine 204 and cysteine 206. Residue cysteine 206 is modified to Cysteine methyl ester.

This sequence belongs to the small GTPase superfamily. Rab family.

The protein localises to the cell membrane. Protein transport. Probably involved in vesicular traffic. The chain is Ras-related protein Rab7 from Vigna aconitifolia (Moth bean).